Reading from the N-terminus, the 191-residue chain is Adenine phosphoribosyltransferase 5 (191 aa).

It belongs to the purine/pyrimidine phosphoribosyltransferase family. As to quaternary structure, homodimer.

It is found in the cytoplasm. It carries out the reaction AMP + diphosphate = 5-phospho-alpha-D-ribose 1-diphosphate + adenine. Its pathway is purine metabolism; AMP biosynthesis via salvage pathway; AMP from adenine: step 1/1. Its function is as follows. Catalyzes a salvage reaction resulting in the formation of AMP, that is energically less costly than de novo synthesis. May contribute to the recycling of adenine into adenylate nucleotides and the inactivation of cytokinins by phosphoribosylation. Possesses low activity toward adenine, but can efficiently convert cytokinins from free bases (active form) to the corresponding nucleotides (inactive form). The chain is Adenine phosphoribosyltransferase 5 (APT5) from Arabidopsis thaliana (Mouse-ear cress).